The following is a 277-amino-acid chain: Methyltransferase adrK (277 aa).

S-adenosyl-L-methionine contacts are provided by residues 123-124, 150-151, and 151-152; these read DL, DV, and VL.

It belongs to the class I-like SAM-binding methyltransferase superfamily. Homodimer.

It functions in the pathway secondary metabolite biosynthesis; terpenoid biosynthesis. In terms of biological role, methyltransferase; part of the gene cluster that mediates the biosynthesis of andrastins, meroterpenoid compounds that exhibit inhibitory activity against ras farnesyltransferase, suggesting that they could be promising leads for antitumor agents. The first step of the pathway is the synthesis of 3,5-dimethylorsellinic acid (DMOA) by the polyketide synthase adrD via condensation of one acetyl-CoA starter unit with 3 malonyl-CoA units and 2 methylations. DMAO is then converted to farnesyl-DMAO by the prenyltransferase adrG. The methyltransferase adrK catalyzes the methylation of the carboxyl group of farnesyl-DMAO to farnesyl-DMAO methyl ester which is further converted to epoxyfarnesyl-DMAO methyl ester by the FAD-dependent monooxygenase adrH. The terpene cyclase adrI then catalyzes the carbon skeletal rearrangement to generate the andrastin E, the first compound in the pathway having the andrastin scaffold, with the tetracyclic ring system. The post-cyclization tailoring enzymes adrF, adrE, adrJ, and adrA, are involved in the conversion of andrastin E into andrastin A. The short chain dehydrogenase adrF is responsible for the oxidation of the C-3 a hydroxyl group of andrastin E to yield the corresponding ketone, andrastin D. The ketoreductase adrE stereoselectively reduces the carbonyl moiety to reverse the stereochemistry of the C-3 position to yield andrastin F. The acetyltransferase adrJ is the acetyltransferase that attaches the acetyl group to the C-3 hydroxyl group of andrastin F to yield andrastin C. Finally, the cytochrome P450 monooxygenase adrA catalyzes two sequential oxidation reactions of the C-23 methyl group, to generate the corresponding alcohol andrastin B, and aldehyde andrastin A. This Penicillium rubens (strain ATCC 28089 / DSM 1075 / NRRL 1951 / Wisconsin 54-1255) (Penicillium chrysogenum) protein is Methyltransferase adrK.